A 93-amino-acid polypeptide reads, in one-letter code: DNA-binding protein Fis (93 aa).

The segment at residues 74-93 (QTRAALMMGINRGTLRKKLK) is a DNA-binding region (H-T-H motif).

Belongs to the transcriptional regulatory Fis family. In terms of assembly, homodimer.

Its function is as follows. Activates ribosomal RNA transcription. Plays a direct role in upstream activation of rRNA promoters. The chain is DNA-binding protein Fis from Klebsiella pneumoniae.